Consider the following 140-residue polypeptide: Large ribosomal subunit protein uL11 (140 aa).

It belongs to the universal ribosomal protein uL11 family. In terms of assembly, part of the ribosomal stalk of the 50S ribosomal subunit. Interacts with L10 and the large rRNA to form the base of the stalk. L10 forms an elongated spine to which L12 dimers bind in a sequential fashion forming a multimeric L10(L12)X complex. In terms of processing, one or more lysine residues are methylated.

Forms part of the ribosomal stalk which helps the ribosome interact with GTP-bound translation factors. This Staphylococcus aureus (strain Mu3 / ATCC 700698) protein is Large ribosomal subunit protein uL11.